The sequence spans 138 residues: Large ribosomal subunit protein uL13 (138 aa).

This sequence belongs to the universal ribosomal protein uL13 family. Part of the 50S ribosomal subunit.

Its function is as follows. This protein is one of the early assembly proteins of the 50S ribosomal subunit, although it is not seen to bind rRNA by itself. It is important during the early stages of 50S assembly. This Picrophilus torridus (strain ATCC 700027 / DSM 9790 / JCM 10055 / NBRC 100828 / KAW 2/3) protein is Large ribosomal subunit protein uL13.